An 831-amino-acid polypeptide reads, in one-letter code: Periplasmic nitrate reductase (831 aa).

The tat-type signal signal peptide spans methionine 1–alanine 29. The region spanning leucine 41–aspartate 97 is the 4Fe-4S Mo/W bis-MGD-type domain. Cysteine 48, cysteine 51, cysteine 55, and cysteine 83 together coordinate [4Fe-4S] cluster. Residues lysine 85, glutamine 152, asparagine 177, cysteine 181, tryptophan 214 to methionine 221, serine 245 to histidine 249, glutamine 264 to aspartate 266, methionine 375, glutamine 379, asparagine 485, serine 511 to aspartate 512, lysine 534, aspartate 561, and threonine 721 to serine 730 each bind Mo-bis(molybdopterin guanine dinucleotide). Tryptophan 797 serves as a coordination point for substrate. 2 residues coordinate Mo-bis(molybdopterin guanine dinucleotide): asparagine 805 and lysine 822.

The protein belongs to the prokaryotic molybdopterin-containing oxidoreductase family. NasA/NapA/NarB subfamily. In terms of assembly, component of the periplasmic nitrate reductase NapAB complex composed of NapA and NapB. Requires [4Fe-4S] cluster as cofactor. Mo-bis(molybdopterin guanine dinucleotide) is required as a cofactor. Post-translationally, predicted to be exported by the Tat system. The position of the signal peptide cleavage has not been experimentally proven.

The protein localises to the periplasm. The catalysed reaction is 2 Fe(II)-[cytochrome] + nitrate + 2 H(+) = 2 Fe(III)-[cytochrome] + nitrite + H2O. Its function is as follows. Catalytic subunit of the periplasmic nitrate reductase complex NapAB. Receives electrons from NapB and catalyzes the reduction of nitrate to nitrite. The polypeptide is Periplasmic nitrate reductase (Saccharophagus degradans (strain 2-40 / ATCC 43961 / DSM 17024)).